The sequence spans 188 residues: NADH-quinone oxidoreductase subunit I 2 (188 aa).

2 consecutive 4Fe-4S ferredoxin-type domains span residues 56 to 88 (HFLK…VVPY) and 98 to 127 (AKFE…LGQQ). [4Fe-4S] cluster-binding residues include Cys68, Cys71, Cys74, Cys78, Cys107, Cys110, Cys113, and Cys117.

It belongs to the complex I 23 kDa subunit family. NDH-1 is composed of 14 different subunits. Subunits NuoA, H, J, K, L, M, N constitute the membrane sector of the complex. [4Fe-4S] cluster is required as a cofactor.

It is found in the cell inner membrane. It catalyses the reaction a quinone + NADH + 5 H(+)(in) = a quinol + NAD(+) + 4 H(+)(out). In terms of biological role, NDH-1 shuttles electrons from NADH, via FMN and iron-sulfur (Fe-S) centers, to quinones in the respiratory chain. The immediate electron acceptor for the enzyme in this species is believed to be ubiquinone. Couples the redox reaction to proton translocation (for every two electrons transferred, four hydrogen ions are translocated across the cytoplasmic membrane), and thus conserves the redox energy in a proton gradient. This chain is NADH-quinone oxidoreductase subunit I 2, found in Rhizobium meliloti (strain 1021) (Ensifer meliloti).